Here is a 286-residue protein sequence, read N- to C-terminus: 4-hydroxybenzoate octaprenyltransferase (286 aa).

8 consecutive transmembrane segments (helical) span residues 20-40 (IGTF…AGGM), 43-63 (LKVL…GCII), 95-115 (ILFV…NPLV), 116-136 (VQLS…KRFT), 142-162 (FLGV…LGTV), 167-187 (WWLF…YAMV), 210-230 (QIIG…GLSA), and 235-255 (VFAL…KLIF).

Belongs to the UbiA prenyltransferase family. The cofactor is Mg(2+).

It localises to the cell inner membrane. The enzyme catalyses all-trans-octaprenyl diphosphate + 4-hydroxybenzoate = 4-hydroxy-3-(all-trans-octaprenyl)benzoate + diphosphate. Its pathway is cofactor biosynthesis; ubiquinone biosynthesis. Its function is as follows. Catalyzes the prenylation of para-hydroxybenzoate (PHB) with an all-trans polyprenyl group. Mediates the second step in the final reaction sequence of ubiquinone-8 (UQ-8) biosynthesis, which is the condensation of the polyisoprenoid side chain with PHB, generating the first membrane-bound Q intermediate 3-octaprenyl-4-hydroxybenzoate. The polypeptide is 4-hydroxybenzoate octaprenyltransferase (Shewanella loihica (strain ATCC BAA-1088 / PV-4)).